Here is a 269-residue protein sequence, read N- to C-terminus: Zinc transporter ZupT (269 aa).

8 consecutive transmembrane segments (helical) span residues 11 to 31 (IALA…LLVL), 40 to 60 (LLAF…LSEI), 80 to 100 (YGTL…HFIP), 125 to 145 (ALLT…ATFF), 158 to 178 (AFAI…PVYF), 187 to 207 (FSAS…GYWL), 217 to 237 (FGWV…DELL), and 249 to 269 (TVYG…LFKW). Residues Asn-136 and Glu-139 each coordinate Fe(2+). The Zn(2+) site is built by Glu-139 and His-164. Fe(2+) contacts are provided by Asn-165, Glu-168, and Glu-197. A Zn(2+)-binding site is contributed by Glu-168.

This sequence belongs to the ZIP transporter (TC 2.A.5) family. ZupT subfamily.

Its subcellular location is the cell inner membrane. It catalyses the reaction Zn(2+)(in) = Zn(2+)(out). Mediates zinc uptake. May also transport other divalent cations. The protein is Zinc transporter ZupT of Stenotrophomonas maltophilia (strain K279a).